The primary structure comprises 244 residues: LOB domain-containing protein 17 (244 aa).

The LOB domain maps to 6 to 108 (SPCGACKFLR…TQLEILKQQA (103 aa)).

It belongs to the LOB domain-containing protein family. Expressed in roots, stems, leaves and flowers.

The sequence is that of LOB domain-containing protein 17 (LBD17) from Arabidopsis thaliana (Mouse-ear cress).